Consider the following 418-residue polypeptide: NADH-quinone oxidoreductase subunit D (418 aa).

The protein belongs to the complex I 49 kDa subunit family. In terms of assembly, NDH-1 is composed of 14 different subunits. Subunits NuoB, C, D, E, F, and G constitute the peripheral sector of the complex.

It localises to the cell inner membrane. It carries out the reaction a quinone + NADH + 5 H(+)(in) = a quinol + NAD(+) + 4 H(+)(out). Functionally, NDH-1 shuttles electrons from NADH, via FMN and iron-sulfur (Fe-S) centers, to quinones in the respiratory chain. The immediate electron acceptor for the enzyme in this species is believed to be ubiquinone. Couples the redox reaction to proton translocation (for every two electrons transferred, four hydrogen ions are translocated across the cytoplasmic membrane), and thus conserves the redox energy in a proton gradient. The polypeptide is NADH-quinone oxidoreductase subunit D (Neisseria gonorrhoeae (strain ATCC 700825 / FA 1090)).